Consider the following 493-residue polypeptide: Probable cytosol aminopeptidase (493 aa).

Residues Lys-259 and Asp-264 each coordinate Mn(2+). Lys-271 is an active-site residue. Mn(2+) contacts are provided by Asp-282, Asp-341, and Glu-343. Arg-345 is a catalytic residue.

Belongs to the peptidase M17 family. Mn(2+) is required as a cofactor.

It localises to the cytoplasm. It carries out the reaction Release of an N-terminal amino acid, Xaa-|-Yaa-, in which Xaa is preferably Leu, but may be other amino acids including Pro although not Arg or Lys, and Yaa may be Pro. Amino acid amides and methyl esters are also readily hydrolyzed, but rates on arylamides are exceedingly low.. It catalyses the reaction Release of an N-terminal amino acid, preferentially leucine, but not glutamic or aspartic acids.. Its function is as follows. Presumably involved in the processing and regular turnover of intracellular proteins. Catalyzes the removal of unsubstituted N-terminal amino acids from various peptides. This is Probable cytosol aminopeptidase from Bacillus cytotoxicus (strain DSM 22905 / CIP 110041 / 391-98 / NVH 391-98).